Reading from the N-terminus, the 400-residue chain is Coiled-coil domain-containing glutamate-rich protein 1 (400 aa).

Residues 1–11 (MTQTVNEREDP) show a composition bias toward basic and acidic residues. Disordered regions lie at residues 1–68 (MTQT…IPGP), 134–164 (RPPG…PPID), and 203–353 (QEKL…DKFL). Basic residues predominate over residues 31–45 (YHRRQRGAPMSKRRY). The segment covering 46-57 (RDGPKTEYEAPR) has biased composition (basic and acidic residues). Residues 137–157 (GRKKRWGRRGRGLRRHPRRSF) are compositionally biased toward basic residues. Over residues 209–220 (QQAALRAHQAQA) the composition is skewed to low complexity. Residues 255 to 271 (PSLTFSPAPGQQNQSPT) are compositionally biased toward polar residues. Residues 275–347 (VEEEEKNVDD…EAGLEEGEQR (73 aa)) show a composition bias toward acidic residues. A coiled-coil region spans residues 299–335 (EEEEVDGESEDEDVDEEEVEEAGNGEEREEDQEEEDV).

It is found in the nucleus. Regulator of histone epigenetic modifications and chromatin compaction into the sperm head, required for histone-to-protamine (HTP) transition. HTP is a key event in which somatic histones are first replaced by testis-specific histone variants, then transition proteins (TNPs) are incorporated into the spermatid nucleus, and finally protamines (PRMs) replace the TNPs to promote chromatin condensation. In Rattus norvegicus (Rat), this protein is Coiled-coil domain-containing glutamate-rich protein 1 (Ccer1).